Here is a 65-residue protein sequence, read N- to C-terminus: Small ribosomal subunit protein bS21 (65 aa).

The protein belongs to the bacterial ribosomal protein bS21 family.

The chain is Small ribosomal subunit protein bS21 from Geobacter sp. (strain M21).